Consider the following 475-residue polypeptide: Cytosolic non-specific dipeptidase (475 aa).

K9 is subject to N6-acetyllysine. At S58 the chain carries Phosphoserine. H99 is a Mn(2+) binding site. D101 is an active-site residue. D132 is a binding site for Mn(2+). The Proton acceptor role is filled by E166. Substrate contacts are provided by residues 166–167 (EE), D195, H228, T330, R343, S417, and H445. Positions 167 and 195 each coordinate Mn(2+). H445 contacts Mn(2+).

It belongs to the peptidase M20A family. Homodimer. It depends on Mn(2+) as a cofactor.

The protein resides in the cytoplasm. The catalysed reaction is Hydrolysis of dipeptides, preferentially hydrophobic dipeptides including prolyl amino acids.. It carries out the reaction L-threonyl-L-threonine + H2O = 2 L-threonine. It catalyses the reaction L-threonyl-L-serine + H2O = L-threonine + L-serine. The enzyme catalyses L-seryl-L-threonine + H2O = L-threonine + L-serine. The catalysed reaction is L-cysteinylglycine + H2O = L-cysteine + glycine. It carries out the reaction L-alanyl-L-cysteine + H2O = L-cysteine + L-alanine. It catalyses the reaction (S)-lactate + L-phenylalanine = N-[(S)-lactoyl]-L-phenylalanine + H2O. Its function is as follows. Catalyzes the peptide bond hydrolysis in dipeptides, displaying a non-redundant activity toward threonyl dipeptides. Mediates threonyl dipeptide catabolism in a tissue-specific way. Has high dipeptidase activity toward cysteinylglycine, an intermediate metabolite in glutathione metabolism. Metabolizes N-lactoyl-amino acids, both through hydrolysis to form lactic acid and amino acids, as well as through their formation by reverse proteolysis. Plays a role in the regulation of cell cycle arrest and apoptosis. The sequence is that of Cytosolic non-specific dipeptidase (CNDP2) from Bos taurus (Bovine).